We begin with the raw amino-acid sequence, 504 residues long: Maturase K (504 aa).

Belongs to the intron maturase 2 family. MatK subfamily.

It is found in the plastid. It localises to the chloroplast. In terms of biological role, usually encoded in the trnK tRNA gene intron. Probably assists in splicing its own and other chloroplast group II introns. In Adansonia digitata (Baobab tree), this protein is Maturase K.